The following is a 38-amino-acid chain: Large ribosomal subunit protein bL36 (38 aa).

The protein belongs to the bacterial ribosomal protein bL36 family.

In Paraburkholderia phymatum (strain DSM 17167 / CIP 108236 / LMG 21445 / STM815) (Burkholderia phymatum), this protein is Large ribosomal subunit protein bL36.